Reading from the N-terminus, the 405-residue chain is Tryptophan synthase beta chain (405 aa).

Lysine 98 is modified (N6-(pyridoxal phosphate)lysine).

Belongs to the TrpB family. As to quaternary structure, tetramer of two alpha and two beta chains. The cofactor is pyridoxal 5'-phosphate.

The catalysed reaction is (1S,2R)-1-C-(indol-3-yl)glycerol 3-phosphate + L-serine = D-glyceraldehyde 3-phosphate + L-tryptophan + H2O. Its pathway is amino-acid biosynthesis; L-tryptophan biosynthesis; L-tryptophan from chorismate: step 5/5. The beta subunit is responsible for the synthesis of L-tryptophan from indole and L-serine. This Xanthomonas axonopodis pv. citri (strain 306) protein is Tryptophan synthase beta chain.